The sequence spans 170 residues: ATP synthase subunit b, chloroplastic (170 aa).

A helical membrane pass occupies residues 15–35 (ILETNVINLAVVVGVVVFFVG).

It belongs to the ATPase B chain family. F-type ATPases have 2 components, F(1) - the catalytic core - and F(0) - the membrane proton channel. F(1) has five subunits: alpha(3), beta(3), gamma(1), delta(1), epsilon(1). F(0) has four main subunits: a(1), b(1), b'(1) and c(10-14). The alpha and beta chains form an alternating ring which encloses part of the gamma chain. F(1) is attached to F(0) by a central stalk formed by the gamma and epsilon chains, while a peripheral stalk is formed by the delta, b and b' chains.

The protein localises to the plastid. The protein resides in the chloroplast thylakoid membrane. F(1)F(0) ATP synthase produces ATP from ADP in the presence of a proton or sodium gradient. F-type ATPases consist of two structural domains, F(1) containing the extramembraneous catalytic core and F(0) containing the membrane proton channel, linked together by a central stalk and a peripheral stalk. During catalysis, ATP synthesis in the catalytic domain of F(1) is coupled via a rotary mechanism of the central stalk subunits to proton translocation. Functionally, component of the F(0) channel, it forms part of the peripheral stalk, linking F(1) to F(0). This Stigeoclonium helveticum (Green alga) protein is ATP synthase subunit b, chloroplastic.